A 322-amino-acid chain; its full sequence is Heat-inducible transcription repressor HrcA (322 aa).

It belongs to the HrcA family.

Functionally, negative regulator of class I heat shock genes (grpE-dnaK-dnaJ and groELS operons). Prevents heat-shock induction of these operons. In Staphylococcus carnosus (strain TM300), this protein is Heat-inducible transcription repressor HrcA.